Consider the following 360-residue polypeptide: Peptide chain release factor 1 (360 aa).

Q235 carries the post-translational modification N5-methylglutamine. Over residues 285 to 295 (RQAAEQTDMRR) the composition is skewed to basic and acidic residues. A disordered region spans residues 285–309 (RQAAEQTDMRRNLLGSGDRSDKIRT).

Belongs to the prokaryotic/mitochondrial release factor family. In terms of processing, methylated by PrmC. Methylation increases the termination efficiency of RF1.

It is found in the cytoplasm. In terms of biological role, peptide chain release factor 1 directs the termination of translation in response to the peptide chain termination codons UAG and UAA. In Haemophilus influenzae (strain ATCC 51907 / DSM 11121 / KW20 / Rd), this protein is Peptide chain release factor 1 (prfA).